A 426-amino-acid polypeptide reads, in one-letter code: Monocarboxylate transporter 13 (426 aa).

Residues 1–10 (MAYRAEPPDG) lie on the Cytoplasmic side of the membrane. The next 12 membrane-spanning stretches (helical) occupy residues 11-31 (GWGW…FGVL), 52-72 (VSWI…VGSA), 83-103 (VMTG…ATSL), 106-126 (LYLS…TPTL), 139-159 (LAMG…APLF), 172-192 (LLLV…LRPL), 221-241 (VALT…VAHL), 244-264 (LGWD…SDLV), 283-303 (LLML…VAEA), 306-326 (GLVA…PVAF), 338-358 (IYCG…LGAP), and 374-394 (FVVA…LPHF). Residues 395–426 (FCFSAPTSKPQDLVTEALDTKVPLPEEGLGED) lie on the Cytoplasmic side of the membrane.

It belongs to the major facilitator superfamily. Monocarboxylate porter (TC 2.A.1.13) family.

Its subcellular location is the golgi apparatus membrane. The protein resides in the cell membrane. In terms of biological role, proton-linked monocarboxylate transporter. May catalyze the transport of monocarboxylates across the plasma membrane. The sequence is that of Monocarboxylate transporter 13 (SLC16A13) from Bos taurus (Bovine).